A 619-amino-acid polypeptide reads, in one-letter code: Putative transcription activator BRLF1 homolog (619 aa).

2 disordered regions span residues 301-389 (LRDS…ETQS) and 563-603 (GLVS…SDEM). Composition is skewed to low complexity over residues 371–389 (EAPQ…ETQS) and 567–582 (QQQA…GGPP). Polar residues predominate over residues 589 to 598 (QEQQQSSTDP).

This sequence belongs to the herpesviridae TAF50 family.

Transcription activation. This is Putative transcription activator BRLF1 homolog (50) from Connochaetes taurinus (Blue wildebeest).